A 372-amino-acid polypeptide reads, in one-letter code: NAD(P)H-quinone oxidoreductase subunit 1 (372 aa).

8 consecutive transmembrane segments (helical) span residues 27 to 47, 97 to 117, 128 to 148, 166 to 186, 204 to 224, 266 to 286, 308 to 328, and 347 to 367; these read LLWI…GVLV, VLFT…WLIV, VGIG…GLLM, AAQS…IVMM, FLSW…ICAL, VLSA…PISI, SLGI…AILL, and FLLP…LAFP.

The protein belongs to the complex I subunit 1 family. As to quaternary structure, NDH-1 is composed of at least 11 different subunits.

It is found in the cellular thylakoid membrane. It carries out the reaction a plastoquinone + NADH + (n+1) H(+)(in) = a plastoquinol + NAD(+) + n H(+)(out). The catalysed reaction is a plastoquinone + NADPH + (n+1) H(+)(in) = a plastoquinol + NADP(+) + n H(+)(out). NDH-1 shuttles electrons from an unknown electron donor, via FMN and iron-sulfur (Fe-S) centers, to quinones in the respiratory and/or the photosynthetic chain. The immediate electron acceptor for the enzyme in this species is believed to be plastoquinone. Couples the redox reaction to proton translocation, and thus conserves the redox energy in a proton gradient. This is NAD(P)H-quinone oxidoreductase subunit 1 from Prochlorococcus marinus (strain NATL2A).